The sequence spans 4660 residues: Low-density lipoprotein receptor-related protein 2 (4660 aa).

A signal peptide spans 1 to 25 (MERGAAAAAWMLLLAIAACLEPVSS). Topologically, residues 26 to 4425 (QECGSGNFRC…LSRGIPPGTT (4400 aa)) are extracellular. LDL-receptor class A domains are found at residues 27–63 (ECGS…IGCP), 66–104 (SCES…QNCA), 107–143 (TCSA…RNCH), 141–180 (NCHY…ANCT), 182–218 (LCSQ…RNCN), and 221–257 (TCGG…DGCE). Disulfide bonds link Cys28-Cys40, Cys35-Cys53, Cys47-Cys62, Cys67-Cys80, Cys74-Cys93, Cys87-Cys103, Cys108-Cys120, Cys115-Cys133, Cys127-Cys142, Cys142-Cys157, Cys152-Cys170, Cys164-Cys179, Cys183-Cys195, Cys190-Cys208, Cys202-Cys217, Cys222-Cys234, Cys229-Cys247, and Cys241-Cys256. 2 N-linked (GlcNAc...) asparagine glycosylation sites follow: Asn159 and Asn178. An N-linked (GlcNAc...) asparagine glycan is attached at Asn259. Residues 264–307 (RCYPREWACPGSGRCISIDKVCDGVPDCPEGDDENNVTSGRTCG) form the LDL-receptor class A 7 domain. 3 cysteine pairs are disulfide-bonded: Cys265-Cys278, Cys272-Cys291, and Cys285-Cys306. Residues Asn299 and Asn340 are each glycosylated (N-linked (GlcNAc...) asparagine). The region spanning 347–382 (DFDDCQIWGICDQKCENRQGRHQCLCEEGYILERGQ) is the EGF-like 1; calcium-binding domain. 2 cysteine pairs are disulfide-bonded: Cys351/Cys361 and Cys357/Cys370. LDL-receptor class B repeat units follow at residues 435 to 477 (HRVF…DWIN), 478 to 520 (NKLY…DPTV), 521 to 567 (GYLF…DLVS), and 568 to 612 (KRVY…FEEH). Residue Asn462 is glycosylated (N-linked (GlcNAc...) asparagine). The N-linked (GlcNAc...) asparagine glycan is linked to Asn657. LDL-receptor class B repeat units follow at residues 752–794 (STVF…DWIS), 795–836 (RNLY…HPTA), 837–880 (GYMF…DWSA), and 881–924 (SRLY…FKDN). Asn865 carries an N-linked (GlcNAc...) asparagine glycan. An LDL-receptor class A 8 domain is found at 1024–1060 (QCGSLSFPCNNGKCVPSFFRCDGVDDCHDNSDEHQCG). Disulfide bonds link Cys1025–Cys1037, Cys1032–Cys1050, and Cys1044–Cys1059. Asn1063 is a glycosylation site (N-linked (GlcNAc...) asparagine). LDL-receptor class A domains lie at 1065–1102 (TCSP…QNCP), 1109–1145 (TCPS…KNCQ), 1149–1185 (TCQP…AGCV), 1187–1224 (NCTS…AGCP), 1230–1268 (MCHP…TGCV), 1271–1307 (TCSP…KDCP), and 1312–1350 (HCPS…PLCN). 9 disulfides stabilise this stretch: Cys1066–Cys1079, Cys1073–Cys1092, Cys1086–Cys1101, Cys1110–Cys1122, Cys1117–Cys1135, Cys1129–Cys1144, Cys1150–Cys1162, Cys1157–Cys1175, and Cys1169–Cys1184. Trp1127, Asp1130, Asp1132, Asp1134, Asp1140, and Glu1141 together coordinate Ca(2+). Asn1187 carries an N-linked (GlcNAc...) asparagine glycan. Disulfide bonds link Cys1188/Cys1201, Cys1195/Cys1214, Cys1208/Cys1223, Cys1231/Cys1244, Cys1238/Cys1257, Cys1251/Cys1267, Cys1272/Cys1284, Cys1279/Cys1297, Cys1291/Cys1306, Cys1313/Cys1326, Cys1320/Cys1339, Cys1333/Cys1349, Cys1354/Cys1365, Cys1361/Cys1374, Cys1376/Cys1389, Cys1395/Cys1405, Cys1401/Cys1414, and Cys1416/Cys1429. The Ca(2+) site is built by Tyr1206, Asp1209, Val1211, Asp1213, Asp1219, and Glu1220. N-linked (GlcNAc...) asparagine glycans are attached at residues Asn1328 and Asn1341. The EGF-like 2 domain maps to 1350–1390 (NQDSCSHFNGGCTHQCMQGPFGATCLCPLGYQLANDTKTCE). Asn1384 carries an N-linked (GlcNAc...) asparagine glycan. Residues 1391–1430 (DINECDIPGFCSQHCVNMRGSFRCACDPEYTLESDGRTCK) form the EGF-like 3; calcium-binding domain. Residues Asn1451, Asn1497, and Asn1551 are each glycosylated (N-linked (GlcNAc...) asparagine). LDL-receptor class B repeat units follow at residues 1479–1521 (GRVF…DWIG), 1522–1564 (RNLY…DPRM), 1567–1610 (NVMF…DYPN), 1611–1655 (RLIY…FEDF), and 1656–1696 (VYWT…IHPS). N-linked (GlcNAc...) asparagine glycans are attached at residues Asn1676, Asn1733, and Asn1811. LDL-receptor class B repeat units follow at residues 1791-1833 (QFIY…DWVS), 1834-1883 (RNIY…DPAR), 1884-1931 (GKLY…DIQE), 1932-1973 (QKLY…YGSF), 1974-2014 (LYYS…YHRR), 2108-2157 (GFIY…DWAA), 2158-2202 (GNLY…DPKH), 2203-2246 (RYLF…DHDT), and 2247-2290 (GYIY…FGES). Asn2134, Asn2178, and Asn2225 each carry an N-linked (GlcNAc...) asparagine glycan. Asn2396 carries N-linked (GlcNAc...) asparagine glycosylation. 5 LDL-receptor class B repeats span residues 2432–2478 (NRIF…DWIN), 2479–2519 (RRIY…DPCR), 2520–2563 (GYMY…DLET), 2564–2605 (DLLY…YGQY), and 2606–2647 (IYWT…VVKT). N-linked (GlcNAc...) asparagine glycans are attached at residues Asn2488 and Asn2548. 10 LDL-receptor class A domains span residues 2700-2738 (RCNQ…TVCA), 2741-2777 (TCRS…AGCL), 2780-2819 (NCNS…KNCP), 2822-2861 (TCPP…IYCA), 2864-2902 (TCRS…DTCG), 2907-2946 (TCRA…HHCE), 2949-2991 (NCSS…QNCT), 2994-3030 (TCSA…RGCS), 3033-3071 (PCHA…HLCH), and 3076-3112 (TCPL…KGCG). 18 disulfide bridges follow: Cys2701/Cys2713, Cys2708/Cys2726, Cys2720/Cys2737, Cys2742/Cys2754, Cys2749/Cys2767, Cys2761/Cys2776, Cys2781/Cys2794, Cys2789/Cys2807, Cys2801/Cys2818, Cys2823/Cys2836, Cys2830/Cys2849, Cys2843/Cys2860, Cys2865/Cys2878, Cys2872/Cys2891, Cys2885/Cys2901, Cys2908/Cys2920, Cys2915/Cys2933, and Cys2927/Cys2945. The N-linked (GlcNAc...) asparagine glycan is linked to Asn2782. Residue Asn2810 is glycosylated (N-linked (GlcNAc...) asparagine). A glycan (N-linked (GlcNAc...) asparagine) is linked at Asn2949. 18 disulfides stabilise this stretch: Cys2950–Cys2967, Cys2957–Cys2980, Cys2974–Cys2990, Cys2995–Cys3007, Cys3002–Cys3020, Cys3014–Cys3029, Cys3034–Cys3046, Cys3041–Cys3059, Cys3053–Cys3070, Cys3077–Cys3089, Cys3084–Cys3102, Cys3096–Cys3111, Cys3116–Cys3128, Cys3124–Cys3137, Cys3139–Cys3152, Cys3158–Cys3169, Cys3165–Cys3178, and Cys3180–Cys3193. Asn2989 carries an N-linked (GlcNAc...) asparagine glycan. An EGF-like 4 domain is found at 3112–3153 (GINECLDSSISRCDHNCTDTITSFYCSCLPGYKLMSDKRSCV). N-linked (GlcNAc...) asparagine glycosylation occurs at Asn3127. In terms of domain architecture, EGF-like 5; calcium-binding spans 3154 to 3194 (DIDECKESPQLCSQKCENVVGSYICKCAPGYIREPDGKSCR). N-linked (GlcNAc...) asparagine glycans are attached at residues Asn3213, Asn3259, Asn3317, and Asn3357. 5 LDL-receptor class B repeats span residues 3241-3283 (KRLY…DWVS), 3284-3326 (RKLY…EHPR), 3335-3378 (GHVY…DYTN), 3379-3421 (DLLY…FEDT), and 3422-3462 (VFWT…YHPY). Asn3448 carries N-linked (GlcNAc...) asparagine glycosylation. LDL-receptor class A domains lie at 3513 to 3551 (MCSS…DLCP), 3554 to 3592 (FCRL…VLCE), 3595 to 3633 (RCES…SHCA), 3636 to 3674 (TCRP…DECT), 3679 to 3717 (NCDN…QGCE), 3720 to 3757 (PCHP…ENCV), 3760 to 3796 (ECSE…RDCE), and 3799 to 3835 (TCHP…SACP). 24 cysteine pairs are disulfide-bonded: Cys3514–Cys3527, Cys3521–Cys3540, Cys3534–Cys3550, Cys3555–Cys3567, Cys3562–Cys3580, Cys3574–Cys3591, Cys3596–Cys3608, Cys3603–Cys3621, Cys3615–Cys3632, Cys3637–Cys3649, Cys3644–Cys3662, Cys3656–Cys3673, Cys3680–Cys3694, Cys3688–Cys3707, Cys3701–Cys3716, Cys3721–Cys3734, Cys3729–Cys3747, Cys3741–Cys3756, Cys3761–Cys3773, Cys3768–Cys3786, Cys3780–Cys3795, Cys3800–Cys3812, Cys3807–Cys3825, and Cys3819–Cys3834. N-linked (GlcNAc...) asparagine glycosylation is present at Asn3566. A glycan (N-linked (GlcNAc...) asparagine) is linked at Asn3682. Asn3840 is a glycosylation site (N-linked (GlcNAc...) asparagine). LDL-receptor class A domains lie at 3843-3881 (YCPA…HLCF), 3884-3923 (PCES…EHCR), and 3929-3965 (PCTD…TGCN). Cystine bridges form between Cys3844/Cys3856, Cys3851/Cys3869, Cys3863/Cys3880, Cys3885/Cys3898, Cys3893/Cys3911, Cys3905/Cys3922, Cys3930/Cys3942, Cys3937/Cys3955, and Cys3949/Cys3964. An EGF-like 6 domain is found at 3968 to 4003 (DNRTCAENICEQNCTQLSSGGFICSCRPGFKPSTSD). N-linked (GlcNAc...) asparagine glycosylation is found at Asn3969 and Asn3980. 5 cysteine pairs are disulfide-bonded: Cys3972-Cys3981, Cys3977-Cys3991, Cys4013-Cys4023, Cys4019-Cys4032, and Cys4034-Cys4049. In terms of domain architecture, EGF-like 7; calcium-binding spans 4009–4050 (DINECEEFGICPQSCRNSKGSYECFCVDGFKSMSTHYGERCA). The N-linked (GlcNAc...) asparagine glycan is linked to Asn4070. LDL-receptor class B repeat units follow at residues 4156 to 4198 (RHIY…NPKL), 4199 to 4242 (GLMF…DYLN), and 4244 to 4285 (DRVY…FEDK). Asn4329 carries an N-linked (GlcNAc...) asparagine glycan. The 35-residue stretch at 4379-4413 (MPPPCRCMHGGNCYFDENELPKCKCSSGYSGEYCE) folds into the EGF-like 8 domain. 3 disulfides stabilise this stretch: Cys4383/Cys4391, Cys4385/Cys4401, and Cys4403/Cys4412. Residues 4426 to 4446 (MAVLLTFVIVIIVGALVLVGL) form a helical membrane-spanning segment. Residues 4447–4660 (FHYRKTGSLL…ANLVKEDSDV (214 aa)) lie on the Cytoplasmic side of the membrane. An SH3-binding motif is present at residues 4454 to 4463 (SLLPTLPKLP). Residues 4457–4462 (PTLPKL) carry the PxLPxI/L motif 1; mediates interaction with ANKRA2 motif. The short motif at 4460–4465 (PKLPSL) is the PxLPxI/L motif 2; mediates interaction with ANKRA2 element. Ser4464 and Ser4467 each carry phosphoserine. The short motif at 4522 to 4527 (FENPMY) is the Endocytosis signal element. The disordered stretch occupies residues 4559-4582 (NYGRPIDPSEIVPEPKPASPGADE). Ser4577 carries the phosphoserine modification. The interaction with DAB2 stretch occupies residues 4597–4610 (QTTNFENPIYAEMD). The short motif at 4603-4606 (NPIY) is the NPXY motif element. The SH2-binding signature appears at 4606 to 4609 (YAEM). Residues 4617-4660 (VAVAPPPSPSLPAKASKRNLTPGYTATEDTFKDTANLVKEDSDV) form a disordered region. The SH3-binding motif lies at 4619–4630 (VAPPPSPSLPAK). The residue at position 4624 (Ser4624) is a Phosphoserine. The segment covering 4634–4644 (RNLTPGYTATE) has biased composition (polar residues). Thr4637 bears the Phosphothreonine mark. Ser4658 is modified (phosphoserine).

It belongs to the LDLR family. In terms of assembly, binds plasminogen, extracellular matrix components, plasminogen activator-plasminogen activator inhibitor type I complex, apolipoprotein E-enriched beta-VLDL, lipoprotein lipase, lactoferrin, CLU/clusterin and calcium. Forms a multimeric complex together with LRPAP1. Interacts (via PxLPxI/L motif) with ANKRA2 (via ankyrin repeats). Interacts with LRP2BP. Interacts (via NPXY motif) with DAB2; the interaction is not affected by tyrosine phosphorylation of the NPXY motif. Interacts with MB. Interacts with BMP4. Interacts with the Sonic hedgehog protein N-product which is the active product of SHH. Interacts with CST3 in a calcium-dependent manner. Interacts with the vitamin-D binding protein GC/DBP. Interacts with sex hormone-binding protein SHBG. Interacts with angiotensin-2. Also interacts with angiotensin 1-7. Interacts with APOM. Interacts with selenoprotein SEPP1. Interacts with LEP. Interacts with ALB. Interacts with the antiapoptotic protein BIRC5/survivin. Interacts with matrix metalloproteinase MMP2 in complex with metalloproteinase inhibitor TIMP1. In neurons, forms a trimeric complex with APP and APPB1/FE65. Interacts with LDLRAP1/ARH; mediates trafficking of LRP2 to the endocytic recycling compartment. Does not interact with beta-amyloid protein 40 alone but interacts with the complex composed of beta-amyloid protein 40 and CLU/APOJ. Interacts with MDK. A fraction undergoes proteolytic cleavage of the extracellular domain at the cell membrane to generate a cytoplasmic tail fragment. This is internalized into the early endosome from where it trafficks in an LDLRAP1/ARH-dependent manner to the endocytic recycling compartment (ERC). In the ERC, it is further cleaved by gamma-secretase to release a fragment which translocates to the nucleus and mediates transcriptional repression. Post-translationally, N-glycosylation is required for ligand binding. In the inner ear, expressed in the lumen of the endolymphatic sac where it localizes to macrophage-like cells as well as to mitochondria-rich and ribosome-rich epithelial cells (at protein level). In the inner ear, expressed in marginal cells of the stria vascularis, epithelial cells at the spiral prominence, epithelial cells of Reissner's membrane facing the cochlear duct, and Kolliker's organ (at protein level). Expressed in the choroid plexus epithelium in the brain (at protein level). In the brain, also expressed in astrocytes (at protein level). Expression also detected in epithelial cells of the kidney glomerulus and proximal tubule, lung, epididymis and yolk sac.

The protein localises to the apical cell membrane. Its subcellular location is the endosome lumen. It is found in the membrane. It localises to the clathrin-coated pit. The protein resides in the cell projection. The protein localises to the dendrite. Its subcellular location is the axon. Multiligand endocytic receptor. Acts together with CUBN to mediate endocytosis of high-density lipoproteins. Mediates receptor-mediated uptake of polybasic drugs such as aprotinin, aminoglycosides and polymyxin B. In the kidney, mediates the tubular uptake and clearance of leptin. Also mediates transport of leptin across the blood-brain barrier through endocytosis at the choroid plexus epithelium. Endocytosis of leptin in neuronal cells is required for hypothalamic leptin signaling and leptin-mediated regulation of feeding and body weight. Mediates endocytosis and subsequent lysosomal degradation of CST3 in kidney proximal tubule cells. Mediates renal uptake of 25-hydroxyvitamin D3 in complex with the vitamin D3 transporter GC/DBP. Mediates renal uptake of metallothionein-bound heavy metals. Together with CUBN, mediates renal reabsorption of myoglobin. Mediates renal uptake and subsequent lysosomal degradation of APOM. Plays a role in kidney selenium homeostasis by mediating renal endocytosis of selenoprotein SEPP1. Mediates renal uptake of the antiapoptotic protein BIRC5/survivin which may be important for functional integrity of the kidney. Mediates renal uptake of matrix metalloproteinase MMP2 in complex with metalloproteinase inhibitor TIMP1. Mediates endocytosis of Sonic hedgehog protein N-product (ShhN), the active product of SHH. Also mediates ShhN transcytosis. In the embryonic neuroepithelium, mediates endocytic uptake and degradation of BMP4, is required for correct SHH localization in the ventral neural tube and plays a role in patterning of the ventral telencephalon. Required at the onset of neurulation to sequester SHH on the apical surface of neuroepithelial cells of the rostral diencephalon ventral midline and to control PTCH1-dependent uptake and intracellular trafficking of SHH. During neurulation, required in neuroepithelial cells for uptake of folate bound to the folate receptor FOLR1 which is necessary for neural tube closure. In the adult brain, negatively regulates BMP signaling in the subependymal zone which enables neurogenesis to proceed. In astrocytes, mediates endocytosis of ALB which is required for the synthesis of the neurotrophic factor oleic acid. Involved in neurite branching. During optic nerve development, required for SHH-mediated migration and proliferation of oligodendrocyte precursor cells. Mediates endocytic uptake and clearance of SHH in the retinal margin which protects retinal progenitor cells from mitogenic stimuli and keeps them quiescent. Plays a role in reproductive organ development by mediating uptake in reproductive tissues of androgen and estrogen bound to the sex hormone binding protein SHBG. Mediates endocytosis of angiotensin-2. Also mediates endocytosis of angiotensin 1-7. Binds to the complex composed of beta-amyloid protein 40 and CLU/APOJ and mediates its endocytosis and lysosomal degradation. Required for embryonic heart development. Required for normal hearing, possibly through interaction with estrogen in the inner ear. The protein is Low-density lipoprotein receptor-related protein 2 (Lrp2) of Rattus norvegicus (Rat).